Reading from the N-terminus, the 1108-residue chain is Retinal guanylyl cyclase 2 (1108 aa).

The signal sequence occupies residues 1-50; sequence MFLGPWPFSRLLSWFAISSRLSGQHGLTSSKFLRYLCLLALLPLIWWGQA. Residues 51 to 465 are Extracellular-facing; it reads LPYKIGVIGP…QGKICQGGID (415 aa). A disulfide bridge links C104 with C132. The helical transmembrane segment at 466-490 threads the bilayer; it reads PALAMMVCFALLLALLSINGFAYFI. Topologically, residues 491–1108 are cytoplasmic; the sequence is RRRINKIQLI…AERQLVRNKP (618 aa). A Protein kinase domain is found at 532-812; it reads FQIISEVQSG…DEIFNQFKTF (281 aa). The Guanylate cyclase domain occupies 884 to 1014; that stretch reads TLYFSDIVGF…DTVNTASRME (131 aa).

It belongs to the adenylyl cyclase class-4/guanylyl cyclase family. Homodimer. Interacts with RD3; promotes the exit of GUCY2F from the endoplasmic reticulum and its trafficking to the photoreceptor outer segments. Post-translationally, there are 9 conserved cysteine residues in sensory guanylate cyclases, 6 in the extracellular domain, which may be involved in intra- or interchain disulfide bonds. Expressed only in the eye.

It localises to the membrane. Its subcellular location is the photoreceptor outer segment membrane. It carries out the reaction GTP = 3',5'-cyclic GMP + diphosphate. Activated by GUCA1B when free calcium ions concentration is low, and inhibited by GUCA1B when free calcium ions concentration is high. Inhibited by RD3. Functionally, responsible for the synthesis of cyclic GMP (cGMP) in rods and cones of photoreceptors. Plays an essential role in phototransduction, by mediating cGMP replenishment. May also participate in the trafficking of membrane-asociated proteins to the photoreceptor outer segment membrane. In Rattus norvegicus (Rat), this protein is Retinal guanylyl cyclase 2 (Gucy2f).